The following is a 331-amino-acid chain: DNA-directed RNA polymerase subunit alpha (331 aa).

Positions methionine 1–arginine 237 are alpha N-terminal domain (alpha-NTD). The tract at residues phenylalanine 251–asparagine 331 is alpha C-terminal domain (alpha-CTD).

Belongs to the RNA polymerase alpha chain family. In terms of assembly, homodimer. The RNAP catalytic core consists of 2 alpha, 1 beta, 1 beta' and 1 omega subunit. When a sigma factor is associated with the core the holoenzyme is formed, which can initiate transcription.

It carries out the reaction RNA(n) + a ribonucleoside 5'-triphosphate = RNA(n+1) + diphosphate. Its function is as follows. DNA-dependent RNA polymerase catalyzes the transcription of DNA into RNA using the four ribonucleoside triphosphates as substrates. This Buchnera aphidicola subsp. Baizongia pistaciae (strain Bp) protein is DNA-directed RNA polymerase subunit alpha.